Here is an 87-residue protein sequence, read N- to C-terminus: Acyl carrier protein TtuC (87 aa).

Residues 11-87 (ITAEDVQQWL…HALSQFIAAK (77 aa)) enclose the Carrier domain. Ser-48 is subject to O-(pantetheine 4'-phosphoryl)serine.

It depends on pantetheine 4'-phosphate as a cofactor.

Its function is as follows. Carrier protein likely involved in the biosynthesis of a polyyne metabolite. Accepts as substrate the activated form of decanoic acid from TtuA. This Teredinibacter turnerae (strain ATCC 39867 / T7901) protein is Acyl carrier protein TtuC.